The following is a 360-amino-acid chain: Phospho-N-acetylmuramoyl-pentapeptide-transferase (360 aa).

10 helical membrane-spanning segments follow: residues 21-41 (YLSF…LWMG), 73-93 (TMGG…WADL), 94-114 (TNPY…VGFV), 132-152 (WKYF…YAHG), 168-188 (VMPQ…VGTS), 199-219 (GLAI…AWAT), 239-259 (LVVV…FNTY), 263-283 (VFMG…IAVL), 288-308 (FVLV…ILQV), and 338-358 (VIVR…ATLK).

This sequence belongs to the glycosyltransferase 4 family. MraY subfamily. Mg(2+) serves as cofactor.

Its subcellular location is the cell inner membrane. It catalyses the reaction UDP-N-acetyl-alpha-D-muramoyl-L-alanyl-gamma-D-glutamyl-meso-2,6-diaminopimeloyl-D-alanyl-D-alanine + di-trans,octa-cis-undecaprenyl phosphate = di-trans,octa-cis-undecaprenyl diphospho-N-acetyl-alpha-D-muramoyl-L-alanyl-D-glutamyl-meso-2,6-diaminopimeloyl-D-alanyl-D-alanine + UMP. It functions in the pathway cell wall biogenesis; peptidoglycan biosynthesis. Its function is as follows. Catalyzes the initial step of the lipid cycle reactions in the biosynthesis of the cell wall peptidoglycan: transfers peptidoglycan precursor phospho-MurNAc-pentapeptide from UDP-MurNAc-pentapeptide onto the lipid carrier undecaprenyl phosphate, yielding undecaprenyl-pyrophosphoryl-MurNAc-pentapeptide, known as lipid I. The protein is Phospho-N-acetylmuramoyl-pentapeptide-transferase of Vibrio cholerae serotype O1 (strain ATCC 39541 / Classical Ogawa 395 / O395).